The following is a 381-amino-acid chain: Succinyl-diaminopimelate desuccinylase (381 aa).

Position 71 (His71) interacts with Zn(2+). Residue Asp73 is part of the active site. Asp104 contacts Zn(2+). Catalysis depends on Glu138, which acts as the Proton acceptor. The Zn(2+) site is built by Glu139, Glu167, and His353.

This sequence belongs to the peptidase M20A family. DapE subfamily. In terms of assembly, homodimer. Zn(2+) serves as cofactor. The cofactor is Co(2+).

The catalysed reaction is N-succinyl-(2S,6S)-2,6-diaminopimelate + H2O = (2S,6S)-2,6-diaminopimelate + succinate. It participates in amino-acid biosynthesis; L-lysine biosynthesis via DAP pathway; LL-2,6-diaminopimelate from (S)-tetrahydrodipicolinate (succinylase route): step 3/3. Its function is as follows. Catalyzes the hydrolysis of N-succinyl-L,L-diaminopimelic acid (SDAP), forming succinate and LL-2,6-diaminopimelate (DAP), an intermediate involved in the bacterial biosynthesis of lysine and meso-diaminopimelic acid, an essential component of bacterial cell walls. In Shewanella piezotolerans (strain WP3 / JCM 13877), this protein is Succinyl-diaminopimelate desuccinylase.